The sequence spans 372 residues: Queuine tRNA-ribosyltransferase (372 aa).

The active-site Proton acceptor is the D93. Residues 93–97 (DSGGF), D147, Q190, and G217 each bind substrate. The segment at 248-254 (GVGSPDC) is RNA binding. Residue D267 is the Nucleophile of the active site. An RNA binding; important for wobble base 34 recognition region spans residues 272–276 (TRMAR). Residues C305, C307, C310, and H336 each contribute to the Zn(2+) site.

The protein belongs to the queuine tRNA-ribosyltransferase family. As to quaternary structure, homodimer. Within each dimer, one monomer is responsible for RNA recognition and catalysis, while the other monomer binds to the replacement base PreQ1. Zn(2+) serves as cofactor.

The catalysed reaction is 7-aminomethyl-7-carbaguanine + guanosine(34) in tRNA = 7-aminomethyl-7-carbaguanosine(34) in tRNA + guanine. Its pathway is tRNA modification; tRNA-queuosine biosynthesis. Its function is as follows. Catalyzes the base-exchange of a guanine (G) residue with the queuine precursor 7-aminomethyl-7-deazaguanine (PreQ1) at position 34 (anticodon wobble position) in tRNAs with GU(N) anticodons (tRNA-Asp, -Asn, -His and -Tyr). Catalysis occurs through a double-displacement mechanism. The nucleophile active site attacks the C1' of nucleotide 34 to detach the guanine base from the RNA, forming a covalent enzyme-RNA intermediate. The proton acceptor active site deprotonates the incoming PreQ1, allowing a nucleophilic attack on the C1' of the ribose to form the product. After dissociation, two additional enzymatic reactions on the tRNA convert PreQ1 to queuine (Q), resulting in the hypermodified nucleoside queuosine (7-(((4,5-cis-dihydroxy-2-cyclopenten-1-yl)amino)methyl)-7-deazaguanosine). This is Queuine tRNA-ribosyltransferase from Desulforudis audaxviator (strain MP104C).